The sequence spans 858 residues: MTGDELRSAFLRFFEKKGHKILPSASLIPDDPQLLFTVAGMVPFKPIFWGKVEPVYTRVTTCQKCLRTNDIENVGRTPRHQTFFEMLGNFSFGDYFKKEAIIWAWEFVTEVLKLEKDRLWITVYEEDEESFKIWKDIVGVCEKKIIRMGKDTNFWGPAGPTGPCGPCSEIHYDTGLNEDCSDGECTPANSDKRFLEIWNLVFTEFYQDEKGALYPLPRKNIDTGAGLERVASVVQKVESNFETDIFKPIISKIEDVLGVEYKKDEQKDISIRVIADHSRAVSFLIADGVFPSNEERGYVLRRILRRAVRHGVLLGAQKPFLHLINETVIEHMGNTYSELKNRKDLILEVTRAEEERFFKTISQGNEMLRDIISRSSKVIDGEDVFKLYDTYGFPPDIVVDVAKDYNLKVDLEGFEKLMKIQRERARSARNNVEYAKSQEIYDELAQKSKTVFVGYDTLECEAKVIFLKKSGTKYEAVFDKTSFYAERGGQVSDVGQIVWDGGSASVEHVFIPVEGIIVHIINVEKGELKEGTKVRLIVDREKRLSTARNHTATHLLHAALRKVLGTHVKQAGSLVTPEKLRFDFTHHKPLTDNELMSIENMVNEIILRSIPVITEEKSYKEAVAEGAIALFGEKYGDVVRVVKVHSFSEELCGGTHVKNTGNIGLFRIVSESAISSGTRRIEAITGFNTLNYLRVKEQLVGNICEKLGTSQDEILSKIENLIEKNINLQKELQQFKSKLLVSQLKQTPFEQIKNIRFVHCVFNDIESNELRNLSDIAVAGENSTVALLFSTSKDKVNLIVRVTQDLAKKIKAGDIAKYAAQILEGGGGGRPDFAQAGGKDPSKINSVIEYTRKLLEQN.

Positions 550, 554, 652, and 656 each coordinate Zn(2+).

It belongs to the class-II aminoacyl-tRNA synthetase family. Zn(2+) serves as cofactor.

The protein resides in the cytoplasm. It catalyses the reaction tRNA(Ala) + L-alanine + ATP = L-alanyl-tRNA(Ala) + AMP + diphosphate. Functionally, catalyzes the attachment of alanine to tRNA(Ala) in a two-step reaction: alanine is first activated by ATP to form Ala-AMP and then transferred to the acceptor end of tRNA(Ala). Also edits incorrectly charged Ser-tRNA(Ala) and Gly-tRNA(Ala) via its editing domain. This Pseudothermotoga lettingae (strain ATCC BAA-301 / DSM 14385 / NBRC 107922 / TMO) (Thermotoga lettingae) protein is Alanine--tRNA ligase.